We begin with the raw amino-acid sequence, 89 residues long: Phosphoribulokinase, chloroplastic (89 aa).

Positions 1–22 (LTSVFGGAAEPPRGGNPDSNTL) are disordered.

The protein belongs to the phosphoribulokinase family.

The protein resides in the plastid. It is found in the chloroplast. It catalyses the reaction D-ribulose 5-phosphate + ATP = D-ribulose 1,5-bisphosphate + ADP + H(+). It participates in carbohydrate biosynthesis; Calvin cycle. Its activity is regulated as follows. Light regulated via thioredoxin by reversible oxidation/reduction of sulfhydryl/disulfide groups. The chain is Phosphoribulokinase, chloroplastic from Vitis sp. (Grape).